Here is a 410-residue protein sequence, read N- to C-terminus: Interleukin-1 receptor type 2 (410 aa).

The signal sequence occupies residues 1 to 13 (MFILLVLVTGVSA). Residues 14–355 (FTTPTVVHTG…SQSLHTTVKE (342 aa)) are Extracellular-facing. 3 consecutive Ig-like C2-type domains span residues 35-136 (PTVH…VELK), 146-237 (PHVS…RNIE), and 249-357 (PVII…KEVS). 3 disulfide bridges follow: Cys-42/Cys-128, Cys-64/Cys-120, and Cys-164/Cys-219. N-linked (GlcNAc...) asparagine glycans are attached at residues Asn-124, Asn-208, Asn-231, and Asn-289. Cys-270 and Cys-338 are joined by a disulfide. Residues 356 to 381 (VSSTFSWSIALAPLSLIILVVGAIWM) form a helical membrane-spanning segment. Residues 382-410 (RRRCKRRAGKTYGLTKLRTDNQDFPSSPN) lie on the Cytoplasmic side of the membrane.

Belongs to the interleukin-1 receptor family. As to quaternary structure, associates with IL1RAP to form a non-signaling interleukin-1 receptor complex. A soluble form (sIL1R2) can also be produced by proteolytic cleavage at the cell surface (shedding) involving a metalloproteinase. In terms of tissue distribution, strongly expressed in B-cells, with levels 21 times higher than IL1R1. In T-cells expressed 5 times more compared with IL1R1.

The protein resides in the membrane. The protein localises to the cell membrane. Its subcellular location is the secreted. Non-signaling receptor for IL1A, IL1B and IL1RN. Reduces IL1B activities. Serves as a decoy receptor by competitive binding to IL1B and preventing its binding to IL1R1. Also modulates cellular response through non-signaling association with IL1RAP after binding to IL1B. IL1R2 (membrane and secreted forms) preferentially binds IL1B and poorly IL1A and IL1RN. The secreted IL1R2 recruits secreted IL1RAP with high affinity; this complex formation may be the dominant mechanism for neutralization of IL1B by secreted/soluble receptors. This is Interleukin-1 receptor type 2 (Il1r2) from Mus musculus (Mouse).